We begin with the raw amino-acid sequence, 295 residues long: MEPMPSATDGGDRSATPSGLSASQRRAELRRRKLLMNSEQRINRIMGFHRPGSGAEEENQTKSKPLDSDILNPLGVPSVSKRVVLGDSVDGGVTDYQPSGGADIRGAQLGDKLDSFIKAPECSSKDGVELRQRNRGDLTADSAPRGSHHGLEQYLSRFEEAMKLRKQLISEKPSQEDGRTTEEFDSFRIFRLVGCALLALVVRAFVCKYLSIFAPFLTLQLAYMGLYKYFPKGEKKVKTTVLTAALLLSGIPAEVINRSMDTYSKMGEVFTDLCVYFFTFIFCHEVLEYWGPEVP.

2 disordered regions span residues 1 to 73 (MEPM…ILNP) and 127 to 148 (GVEL…RGSH). The Cytoplasmic portion of the chain corresponds to 1–188 (MEPMPSATDG…RTTEEFDSFR (188 aa)). Residues 15–24 (ATPSGLSASQ) are compositionally biased toward polar residues. A Phosphoserine modification is found at serine 53. The span at 127 to 138 (GVELRQRNRGDL) shows a compositional bias: basic and acidic residues. Residues 189–206 (IFRLVGCALLALVVRAFV) traverse the membrane as a helical segment. Topologically, residues 207-208 (CK) are lumenal. Residues cysteine 207 and cysteine 283 are joined by a disulfide bond. The chain crosses the membrane as a helical span at residues 209–227 (YLSIFAPFLTLQLAYMGLY). Residues 228-268 (KYFPKGEKKVKTTVLTAALLLSGIPAEVINRSMDTYSKMGE) are Cytoplasmic-facing. A helical membrane pass occupies residues 269–287 (VFTDLCVYFFTFIFCHEVL). The Lumenal segment spans residues 288-295 (EYWGPEVP).

Component of the Golgi to ER traffic (GET) complex, which is composed of GET1/WRB, CAMLG/GET2 and GET3/TRC40. Within the complex, GET1 and CAMLG form a heterotetramer which is stabilized by phosphatidylinositol binding and which binds to the GET3 homodimer. Interacts (via C-terminus) with GET1. Interacts (via N-terminus) with GET3. GET3 shows a higher affinity for CAMLG than for GET1. Interacts (via N-terminus) with TNFRSF13B/TACI (via C-terminus). As to expression, in the central nervous system, expressed in astrocytes, microglia and neurons (at protein level).

The protein localises to the endoplasmic reticulum membrane. In terms of biological role, required for the post-translational delivery of tail-anchored (TA) proteins to the endoplasmic reticulum. Together with GET1/WRB, acts as a membrane receptor for soluble GET3/TRC40, which recognizes and selectively binds the transmembrane domain of TA proteins in the cytosol. Required for the stability of GET1. Stimulates calcium signaling in T cells through its involvement in elevation of intracellular calcium. Essential for the survival of peripheral follicular B cells. The polypeptide is Guided entry of tail-anchored proteins factor CAMLG (Rattus norvegicus (Rat)).